We begin with the raw amino-acid sequence, 373 residues long: 2-aminoethylphosphonate--pyruvate transaminase (373 aa).

Lysine 191 bears the N6-(pyridoxal phosphate)lysine mark.

The protein belongs to the class-V pyridoxal-phosphate-dependent aminotransferase family. PhnW subfamily. As to quaternary structure, homodimer. Pyridoxal 5'-phosphate is required as a cofactor.

The enzyme catalyses (2-aminoethyl)phosphonate + pyruvate = phosphonoacetaldehyde + L-alanine. Its function is as follows. Involved in phosphonate degradation. This Burkholderia ambifaria (strain MC40-6) protein is 2-aminoethylphosphonate--pyruvate transaminase.